The following is a 359-amino-acid chain: Nicotinate-nucleotide--dimethylbenzimidazole phosphoribosyltransferase (359 aa).

Glutamate 318 acts as the Proton acceptor in catalysis.

The protein belongs to the CobT family. In terms of assembly, homodimer.

It carries out the reaction 5,6-dimethylbenzimidazole + nicotinate beta-D-ribonucleotide = alpha-ribazole 5'-phosphate + nicotinate + H(+). It participates in nucleoside biosynthesis; alpha-ribazole biosynthesis; alpha-ribazole from 5,6-dimethylbenzimidazole: step 1/2. In terms of biological role, catalyzes the synthesis of alpha-ribazole-5'-phosphate from nicotinate mononucleotide (NAMN) and 5,6-dimethylbenzimidazole (DMB). This chain is Nicotinate-nucleotide--dimethylbenzimidazole phosphoribosyltransferase, found in Escherichia coli (strain ATCC 8739 / DSM 1576 / NBRC 3972 / NCIMB 8545 / WDCM 00012 / Crooks).